Consider the following 385-residue polypeptide: Meiosis-specific protein MEI4 (385 aa).

The tract at residues 1-126 is interaction with REC114; that stretch reads MDVQKWYLRT…LSQHFVESCT (126 aa). The segment at 86–110 is disordered; the sequence is AQEPKSSESTLTSMEDSGCDLSNEQ. Polar residues predominate over residues 92 to 107; it reads SESTLTSMEDSGCDLS.

Belongs to the MEI4L family. As to quaternary structure, part of the MCD recombinosome complex, at least composed of IHO1, REC114 and MEI4. Forms a complex with REC114; the interaction is required for MEI4 stability. Interacts (via N-terminal domain) with REC114 (via C-terminal domain). Interacts with IHO1.

The protein localises to the chromosome. Its function is as follows. Required for DNA double-strand breaks (DSBs) formation in unsynapsed regions during meiotic recombination. Probably acts by forming a complex with IHO1 and REC114, which activates DSBs formation in unsynapsed regions, an essential step to ensure completion of synapsis. This Homo sapiens (Human) protein is Meiosis-specific protein MEI4.